A 402-amino-acid polypeptide reads, in one-letter code: 4-hydroxy-3-methylbut-2-enyl diphosphate reductase (402 aa).

Cys-66 contributes to the [4Fe-4S] cluster binding site. His-96 contacts (2E)-4-hydroxy-3-methylbut-2-enyl diphosphate. Residue His-96 participates in dimethylallyl diphosphate binding. Isopentenyl diphosphate is bound at residue His-96. Cys-157 contributes to the [4Fe-4S] cluster binding site. A (2E)-4-hydroxy-3-methylbut-2-enyl diphosphate-binding site is contributed by His-185. Residue His-185 participates in dimethylallyl diphosphate binding. His-185 provides a ligand contact to isopentenyl diphosphate. Glu-187 acts as the Proton donor in catalysis. Thr-250 serves as a coordination point for (2E)-4-hydroxy-3-methylbut-2-enyl diphosphate. [4Fe-4S] cluster is bound at residue Cys-288. (2E)-4-hydroxy-3-methylbut-2-enyl diphosphate contacts are provided by Ser-317, Ser-318, Asn-319, and Ser-379. Residues Ser-317, Ser-318, Asn-319, and Ser-379 each contribute to the dimethylallyl diphosphate site. The isopentenyl diphosphate site is built by Ser-317, Ser-318, Asn-319, and Ser-379.

It belongs to the IspH family. [4Fe-4S] cluster serves as cofactor.

The enzyme catalyses isopentenyl diphosphate + 2 oxidized [2Fe-2S]-[ferredoxin] + H2O = (2E)-4-hydroxy-3-methylbut-2-enyl diphosphate + 2 reduced [2Fe-2S]-[ferredoxin] + 2 H(+). It carries out the reaction dimethylallyl diphosphate + 2 oxidized [2Fe-2S]-[ferredoxin] + H2O = (2E)-4-hydroxy-3-methylbut-2-enyl diphosphate + 2 reduced [2Fe-2S]-[ferredoxin] + 2 H(+). It participates in isoprenoid biosynthesis; dimethylallyl diphosphate biosynthesis; dimethylallyl diphosphate from (2E)-4-hydroxy-3-methylbutenyl diphosphate: step 1/1. The protein operates within isoprenoid biosynthesis; isopentenyl diphosphate biosynthesis via DXP pathway; isopentenyl diphosphate from 1-deoxy-D-xylulose 5-phosphate: step 6/6. In terms of biological role, catalyzes the conversion of 1-hydroxy-2-methyl-2-(E)-butenyl 4-diphosphate (HMBPP) into a mixture of isopentenyl diphosphate (IPP) and dimethylallyl diphosphate (DMAPP). Acts in the terminal step of the DOXP/MEP pathway for isoprenoid precursor biosynthesis. This is 4-hydroxy-3-methylbut-2-enyl diphosphate reductase from Thermosynechococcus vestitus (strain NIES-2133 / IAM M-273 / BP-1).